The primary structure comprises 317 residues: Flagellar hook-associated protein 3 (317 aa).

The protein belongs to the bacterial flagellin family.

It is found in the secreted. It localises to the bacterial flagellum. This Escherichia coli (strain K12) protein is Flagellar hook-associated protein 3 (flgL).